A 253-amino-acid polypeptide reads, in one-letter code: Transcription factor ORG2 (253 aa).

One can recognise a bHLH domain in the interval 71–123; it reads VKKLNHNASERDRRKKINTLFSSLRSCLPASDQSKKLSIPETVSKSLKYIPEL.

Homodimer. Roots.

The protein localises to the nucleus. In Arabidopsis thaliana (Mouse-ear cress), this protein is Transcription factor ORG2 (ORG2).